The primary structure comprises 119 residues: Phosphoribosyl-AMP cyclohydrolase (119 aa).

Asp-77 serves as a coordination point for Mg(2+). Residue Cys-78 coordinates Zn(2+). Asp-79 and Asp-81 together coordinate Mg(2+). 2 residues coordinate Zn(2+): Cys-94 and Cys-101.

The protein belongs to the PRA-CH family. In terms of assembly, homodimer. It depends on Mg(2+) as a cofactor. Zn(2+) is required as a cofactor.

The protein localises to the cytoplasm. It catalyses the reaction 1-(5-phospho-beta-D-ribosyl)-5'-AMP + H2O = 1-(5-phospho-beta-D-ribosyl)-5-[(5-phospho-beta-D-ribosylamino)methylideneamino]imidazole-4-carboxamide. It participates in amino-acid biosynthesis; L-histidine biosynthesis; L-histidine from 5-phospho-alpha-D-ribose 1-diphosphate: step 3/9. Functionally, catalyzes the hydrolysis of the adenine ring of phosphoribosyl-AMP. In Cereibacter sphaeroides (strain ATCC 17023 / DSM 158 / JCM 6121 / CCUG 31486 / LMG 2827 / NBRC 12203 / NCIMB 8253 / ATH 2.4.1.) (Rhodobacter sphaeroides), this protein is Phosphoribosyl-AMP cyclohydrolase.